The following is a 468-amino-acid chain: uncharacterized protein (468 aa).

The disordered stretch occupies residues 1–22 (MVKRSSHRQVVLDEDDEENYNN). An RING-type zinc finger spans residues 85–123 (CPICTEALQRPFTTHCGHTYCYECLLNWLKESKSCPTCR). Over residues 386 to 402 (DSLNSSSNNSPSHNNIH) the composition is skewed to low complexity. The interval 386 to 468 (DSLNSSSNNS…TIQLDSDEES (83 aa)) is disordered. Positions 417–434 (IVTNGTGLRSSQSSSQNR) are enriched in polar residues.

It is found in the nucleus. This is an uncharacterized protein from Schizosaccharomyces pombe (strain 972 / ATCC 24843) (Fission yeast).